The sequence spans 151 residues: Ribosomal RNA large subunit methyltransferase H (151 aa).

S-adenosyl-L-methionine is bound by residues Ala-101 and 119–124 (LSEMTF).

The protein belongs to the RNA methyltransferase RlmH family. In terms of assembly, homodimer.

Its subcellular location is the cytoplasm. The catalysed reaction is pseudouridine(1915) in 23S rRNA + S-adenosyl-L-methionine = N(3)-methylpseudouridine(1915) in 23S rRNA + S-adenosyl-L-homocysteine + H(+). Its function is as follows. Specifically methylates the pseudouridine at position 1915 (m3Psi1915) in 23S rRNA. The polypeptide is Ribosomal RNA large subunit methyltransferase H (Helicobacter pylori (strain G27)).